Here is a 445-residue protein sequence, read N- to C-terminus: Glutamyl-tRNA(Gln) amidotransferase subunit D (445 aa).

The Asparaginase/glutaminase domain maps to 93-425 (SEIKIISTGG…EKIRSLMISN (333 aa)). Catalysis depends on residues Thr-103, Thr-179, Asp-180, and Lys-258.

Belongs to the asparaginase 1 family. GatD subfamily. Heterodimer of GatD and GatE.

It catalyses the reaction L-glutamyl-tRNA(Gln) + L-glutamine + ATP + H2O = L-glutaminyl-tRNA(Gln) + L-glutamate + ADP + phosphate + H(+). Its function is as follows. Allows the formation of correctly charged Gln-tRNA(Gln) through the transamidation of misacylated Glu-tRNA(Gln) in organisms which lack glutaminyl-tRNA synthetase. The reaction takes place in the presence of glutamine and ATP through an activated gamma-phospho-Glu-tRNA(Gln). The GatDE system is specific for glutamate and does not act on aspartate. This chain is Glutamyl-tRNA(Gln) amidotransferase subunit D, found in Saccharolobus islandicus (strain Y.N.15.51 / Yellowstone #2) (Sulfolobus islandicus).